The primary structure comprises 821 residues: DNA gyrase subunit A (821 aa).

Residues 35–500 enclose the Topo IIA-type catalytic domain; it reads LPDVRDGLKP…GLETIEDEDL (466 aa). The active-site O-(5'-phospho-DNA)-tyrosine intermediate is the Tyr-123. The GyrA-box motif lies at 527–533; it reads QKRGGKG.

The protein belongs to the type II topoisomerase GyrA/ParC subunit family. Heterotetramer, composed of two GyrA and two GyrB chains. In the heterotetramer, GyrA contains the active site tyrosine that forms a transient covalent intermediate with DNA, while GyrB binds cofactors and catalyzes ATP hydrolysis.

The protein localises to the cytoplasm. The enzyme catalyses ATP-dependent breakage, passage and rejoining of double-stranded DNA.. Its function is as follows. A type II topoisomerase that negatively supercoils closed circular double-stranded (ds) DNA in an ATP-dependent manner to modulate DNA topology and maintain chromosomes in an underwound state. Negative supercoiling favors strand separation, and DNA replication, transcription, recombination and repair, all of which involve strand separation. Also able to catalyze the interconversion of other topological isomers of dsDNA rings, including catenanes and knotted rings. Type II topoisomerases break and join 2 DNA strands simultaneously in an ATP-dependent manner. This is DNA gyrase subunit A from Bacillus subtilis (strain 168).